The primary structure comprises 209 residues: Ribosomal RNA large subunit methyltransferase E (209 aa).

5 residues coordinate S-adenosyl-L-methionine: Gly-63, Trp-65, Asp-83, Asp-99, and Asp-124. The active-site Proton acceptor is the Lys-164.

It belongs to the class I-like SAM-binding methyltransferase superfamily. RNA methyltransferase RlmE family.

It localises to the cytoplasm. The catalysed reaction is uridine(2552) in 23S rRNA + S-adenosyl-L-methionine = 2'-O-methyluridine(2552) in 23S rRNA + S-adenosyl-L-homocysteine + H(+). Functionally, specifically methylates the uridine in position 2552 of 23S rRNA at the 2'-O position of the ribose in the fully assembled 50S ribosomal subunit. The sequence is that of Ribosomal RNA large subunit methyltransferase E from Vibrio parahaemolyticus serotype O3:K6 (strain RIMD 2210633).